The following is an 867-amino-acid chain: Leucine--tRNA ligase (867 aa).

Positions Pro-57–His-67 match the 'HIGH' region motif. Residues Ser-308–Val-327 form a disordered region. The span at Gln-309–Lys-319 shows a compositional bias: basic and acidic residues. Positions Lys-631–Ser-635 match the 'KMSKS' region motif. Position 634 (Lys-634) interacts with ATP.

It belongs to the class-I aminoacyl-tRNA synthetase family.

The protein localises to the cytoplasm. It carries out the reaction tRNA(Leu) + L-leucine + ATP = L-leucyl-tRNA(Leu) + AMP + diphosphate. In Synechococcus sp. (strain CC9311), this protein is Leucine--tRNA ligase.